The sequence spans 218 residues: Envelope glycoprotein L (218 aa).

Positions Lys57 to Thr185 are interaction with gH. One can recognise a gL alphaherpesvirus-type domain in the interval Lys60–Thr218. Cystine bridges form between Cys81–Cys113 and Cys183–Cys206.

It belongs to the herpesviridae glycoprotein L (gL) family. Alphaherpesvirinae gL subfamily. In terms of assembly, interacts with glycoprotein H (gH); this interaction is necessary for the correct processing and cell surface expression of gH. The heterodimer gH/gL seems to interact with gB trimers during fusion.

The protein resides in the virion membrane. Its subcellular location is the host cell membrane. It is found in the host Golgi apparatus. It localises to the host trans-Golgi network. The heterodimer glycoprotein H-glycoprotein L is required for the fusion of viral and plasma membranes leading to virus entry into the host cell. Acts as a functional inhibitor of gH and maintains gH in an inhibited form. Upon binding to host integrins, gL dissociates from gH leading to activation of the viral fusion glycoproteins gB and gH. This chain is Envelope glycoprotein L, found in Equus caballus (Horse).